The chain runs to 658 residues: Glycine--tRNA ligase beta subunit (658 aa).

This sequence belongs to the class-II aminoacyl-tRNA synthetase family. As to quaternary structure, tetramer of two alpha and two beta subunits.

The protein resides in the cytoplasm. The catalysed reaction is tRNA(Gly) + glycine + ATP = glycyl-tRNA(Gly) + AMP + diphosphate. This is Glycine--tRNA ligase beta subunit from Rickettsia bellii (strain OSU 85-389).